A 175-amino-acid chain; its full sequence is MSAGGAVPPPPNPAVSFPAPRVTLPAGPDILRTYSGAFVCLEIVLGGLVWILVASSNVPLPLLQGWVMFVSVTAFFFSLLFLGLFLSGMVTQIDANWNFLDFVYHFIVFVFYFGAFLLEAAATSLHDLQCNTTMTVKPLLNDNQYNINVAATVFAFMTTACYGCSLGLALRRWRP.

At 1 to 33 (MSAGGAVPPPPNPAVSFPAPRVTLPAGPDILRT) the chain is on the cytoplasmic side. Residues 30 to 174 (ILRTYSGAFV…SLGLALRRWR (145 aa)) enclose the MARVEL domain. The helical transmembrane segment at 34–54 (YSGAFVCLEIVLGGLVWILVA) threads the bilayer. At 55-65 (SSNVPLPLLQG) the chain is on the lumenal side. A helical transmembrane segment spans residues 66–86 (WVMFVSVTAFFFSLLFLGLFL). Topologically, residues 87-101 (SGMVTQIDANWNFLD) are cytoplasmic. Residues 102 to 122 (FVYHFIVFVFYFGAFLLEAAA) form a helical membrane-spanning segment. Residues 123–148 (TSLHDLQCNTTMTVKPLLNDNQYNIN) are Lumenal-facing. An N-linked (GlcNAc...) asparagine glycan is attached at Asn-131. A helical membrane pass occupies residues 149-169 (VAATVFAFMTTACYGCSLGLA). Topologically, residues 170 to 175 (LRRWRP) are cytoplasmic.

The protein belongs to the MAL family. Interacts with TPD52L2.

Its subcellular location is the cell membrane. The protein localises to the apical cell membrane. Its function is as follows. Member of the machinery of polarized transport. Required for the indirect transcytotic route at the step of the egress of the transcytosing cargo from perinuclear endosomes in order for it to travel to the apical surface via a raft-dependent pathway. The polypeptide is Protein MAL2 (Mal2) (Mus musculus (Mouse)).